Consider the following 335-residue polypeptide: DNA-directed RNA polymerase subunit alpha (335 aa).

An alpha N-terminal domain (alpha-NTD) region spans residues 1 to 233; that stretch reads MMLNATEFLT…QQISIFVDLE (233 aa). An alpha C-terminal domain (alpha-CTD) region spans residues 247 to 335; it reads VDPVLLRPVD…VDDRFSYRSR (89 aa).

Belongs to the RNA polymerase alpha chain family. As to quaternary structure, homodimer. The RNAP catalytic core consists of 2 alpha, 1 beta, 1 beta' and 1 omega subunit. When a sigma factor is associated with the core the holoenzyme is formed, which can initiate transcription.

The enzyme catalyses RNA(n) + a ribonucleoside 5'-triphosphate = RNA(n+1) + diphosphate. Its function is as follows. DNA-dependent RNA polymerase catalyzes the transcription of DNA into RNA using the four ribonucleoside triphosphates as substrates. The polypeptide is DNA-directed RNA polymerase subunit alpha (Psychrobacter sp. (strain PRwf-1)).